The chain runs to 66 residues: MEHSLNSLNNFDFLARSFARMHAEGRPVDILAVTGNMDEEHRTWFCARYAWYCQQMMQTRELELEH.

Belongs to the GlgS family.

In terms of biological role, major determinant of cell surface composition. Negatively regulates motility, adhesion and synthesis of biofilm exopolysaccharides. The polypeptide is Surface composition regulator (Shigella dysenteriae serotype 1 (strain Sd197)).